The sequence spans 213 residues: MIITIFGPPGSGKGTQSSLLIAKYNFKLVSVGDLLRNIISSESKLGKGIKDTVESGNLIQDEVICKLLCDQLALIDGDFLLDGFPRNLNQAHFLTQVLQKRCNRDVDLVIELQLDDNIAIDRLKDRLTCLDCKSIYSISSFKNTTCAKCKSTRLEKRIDDANMLAINKRIREYHSQIEGLREYYKDKLLTINANLSVDRVMQEIESKISCNLI.

10 to 15 (GSGKGT) provides a ligand contact to ATP. The NMP stretch occupies residues 30–59 (SVGDLLRNIISSESKLGKGIKDTVESGNLI). Residues arginine 36, 57–59 (NLI), 83–86 (GFPR), and glutamine 90 contribute to the AMP site. The tract at residues 125–160 (DRLTCLDCKSIYSISSFKNTTCAKCKSTRLEKRIDD) is LID. Arginine 126 lines the ATP pocket. Zn(2+)-binding residues include cysteine 129 and cysteine 132. 135–136 (IY) is an ATP binding site. Residues cysteine 146 and cysteine 149 each contribute to the Zn(2+) site. AMP contacts are provided by arginine 157 and arginine 169. Leucine 195 serves as a coordination point for ATP.

It belongs to the adenylate kinase family. In terms of assembly, monomer.

It is found in the cytoplasm. The catalysed reaction is AMP + ATP = 2 ADP. It participates in purine metabolism; AMP biosynthesis via salvage pathway; AMP from ADP: step 1/1. Its function is as follows. Catalyzes the reversible transfer of the terminal phosphate group between ATP and AMP. Plays an important role in cellular energy homeostasis and in adenine nucleotide metabolism. The polypeptide is Adenylate kinase (Wolbachia pipientis subsp. Culex pipiens (strain wPip)).